A 498-amino-acid polypeptide reads, in one-letter code: 3-octaprenyl-4-hydroxybenzoate carboxy-lyase (498 aa).

Residue asparagine 177 participates in Mn(2+) binding. Prenylated FMN is bound by residues 180–182 (IYR), 194–196 (RWL), and 199–200 (RG). Glutamate 243 contributes to the Mn(2+) binding site. The Proton donor role is filled by aspartate 292.

Belongs to the UbiD family. As to quaternary structure, homohexamer. It depends on prenylated FMN as a cofactor. Mn(2+) is required as a cofactor.

The protein resides in the cell membrane. The enzyme catalyses a 4-hydroxy-3-(all-trans-polyprenyl)benzoate + H(+) = a 2-(all-trans-polyprenyl)phenol + CO2. The protein operates within cofactor biosynthesis; ubiquinone biosynthesis. Catalyzes the decarboxylation of 3-octaprenyl-4-hydroxy benzoate to 2-octaprenylphenol, an intermediate step in ubiquinone biosynthesis. This chain is 3-octaprenyl-4-hydroxybenzoate carboxy-lyase, found in Methylococcus capsulatus (strain ATCC 33009 / NCIMB 11132 / Bath).